A 129-amino-acid chain; its full sequence is Small ribosomal subunit protein uS11 (129 aa).

Belongs to the universal ribosomal protein uS11 family. As to quaternary structure, part of the 30S ribosomal subunit. Interacts with proteins S7 and S18. Binds to IF-3.

In terms of biological role, located on the platform of the 30S subunit, it bridges several disparate RNA helices of the 16S rRNA. Forms part of the Shine-Dalgarno cleft in the 70S ribosome. This is Small ribosomal subunit protein uS11 from Allorhizobium ampelinum (strain ATCC BAA-846 / DSM 112012 / S4) (Agrobacterium vitis (strain S4)).